A 234-amino-acid chain; its full sequence is Large ribosomal subunit protein uL1 (234 aa).

Belongs to the universal ribosomal protein uL1 family. Part of the 50S ribosomal subunit.

In terms of biological role, binds directly to 23S rRNA. The L1 stalk is quite mobile in the ribosome, and is involved in E site tRNA release. Functionally, protein L1 is also a translational repressor protein, it controls the translation of the L11 operon by binding to its mRNA. The polypeptide is Large ribosomal subunit protein uL1 (Anaeromyxobacter sp. (strain Fw109-5)).